Consider the following 274-residue polypeptide: MAIQQEIIAALGVKPTIDPAAEFRVSVEFLKAYLKKHIFVRTLVLGISGGQDSTLTGKICQQAISELRQETGIADYQFIAVRLPHGEQKDEADCKDAIAFIEPDRVITINIKSAIQASEATLSEAGIVLSDYVKGNEKARERMKAQYSIAGMTAGLVVGTDHAAEAVTGFFTKYGDGGTDINPLFRLNKRQGRALLQHLGCPEHLYLKAPTADLEEESPALPDETALGVTYEMLDDYLEGKTIDAAAARVIENWYLRTEHKRHPPVTVFDDFWK.

ATP is bound at residue Gly-46–Ser-53. Asp-52 provides a ligand contact to Mg(2+). Arg-140 contacts deamido-NAD(+). Thr-160 is a binding site for ATP. Glu-165 serves as a coordination point for Mg(2+). Deamido-NAD(+)-binding residues include Lys-173 and Asp-180. Lys-189 and Thr-211 together coordinate ATP. His-260–Lys-261 lines the deamido-NAD(+) pocket.

Belongs to the NAD synthetase family. As to quaternary structure, homodimer.

It catalyses the reaction deamido-NAD(+) + NH4(+) + ATP = AMP + diphosphate + NAD(+) + H(+). It participates in cofactor biosynthesis; NAD(+) biosynthesis; NAD(+) from deamido-NAD(+) (ammonia route): step 1/1. Its function is as follows. Catalyzes the ATP-dependent amidation of deamido-NAD to form NAD. Uses ammonia as a nitrogen source. The sequence is that of NH(3)-dependent NAD(+) synthetase from Sodalis glossinidius (strain morsitans).